A 174-amino-acid chain; its full sequence is Large ribosomal subunit protein uL10 (174 aa).

It belongs to the universal ribosomal protein uL10 family. As to quaternary structure, part of the ribosomal stalk of the 50S ribosomal subunit. The N-terminus interacts with L11 and the large rRNA to form the base of the stalk. The C-terminus forms an elongated spine to which L12 dimers bind in a sequential fashion forming a multimeric L10(L12)X complex.

Its function is as follows. Forms part of the ribosomal stalk, playing a central role in the interaction of the ribosome with GTP-bound translation factors. This chain is Large ribosomal subunit protein uL10, found in Geotalea uraniireducens (strain Rf4) (Geobacter uraniireducens).